Reading from the N-terminus, the 496-residue chain is MNSLSLVFWSILAVVGLLLFIKFKPPTIASLLLSKDEAKEISIQFIKEFVGIDVENWDFYSVYWYDHDTVNKLHHLGILKKNRKVLYDVGLVESWRVRFVHQNQSFVVGVNANREITFFYADVPKKTLSGKFEQVSPETLKQRLMASPDGLWSRANMTGTGKKEEDFREVSTYWYIAEAGDIRLKVTVELQGGRISYIGTEQEILTDQMSKVIRDEQVESTFGVSGMLGSALAMILAILILVFMDVQTSIIFSLVLGLLIIICQSLTLKEDIQLTIVNAYDARMSVKTVSLLGILSTLLTGLLTGFVVFICSLAGNALAGDFGWKTFEQPIVQIFYGIGAGLISLGVTSLLFNLLEKKQYLRISPELSNRTVFLSGFTFRQGLNMSIQSSIGEEVIYRLLMIPVIWWMSGNILISIIVSSFLWAVMHQVTGYDPRWIRWLHLFIFGCFLGVLFIKFGFICVLVAHFIHNLVLVCMPLWQFKLQKHMHHDQPKHTSL.

The next 7 membrane-spanning stretches (helical) occupy residues 1–21 (MNSL…LLFI), 224–244 (VSGM…LVFM), 248–268 (TSII…SLTL), 291–311 (LLGI…VFIC), 331–351 (IVQI…TSLL), 399–419 (LLMI…IIVS), and 443–463 (FIFG…CVLV).

It is found in the membrane. In terms of biological role, required for production of the bacteriocin SkfA. The sequence is that of Sporulation-killing factor biosynthesis protein SkfC from Bacillus subtilis (strain 168).